The primary structure comprises 317 residues: Ferrochelatase (317 aa).

His-187 and Glu-268 together coordinate Fe cation.

The protein belongs to the ferrochelatase family.

It localises to the cytoplasm. It catalyses the reaction heme b + 2 H(+) = protoporphyrin IX + Fe(2+). The protein operates within porphyrin-containing compound metabolism; protoheme biosynthesis; protoheme from protoporphyrin-IX: step 1/1. Functionally, catalyzes the ferrous insertion into protoporphyrin IX. This Campylobacter concisus (strain 13826) protein is Ferrochelatase.